Here is a 285-residue protein sequence, read N- to C-terminus: uncharacterized protein (285 aa).

Belongs to the methyltransferase superfamily.

This is an uncharacterized protein from Mycobacterium tuberculosis (strain CDC 1551 / Oshkosh).